Reading from the N-terminus, the 404-residue chain is Cysteine desulfurase IscS (404 aa).

Pyridoxal 5'-phosphate contacts are provided by residues 75–76 (AT), N155, Q183, and 203–205 (SAH). K206 bears the N6-(pyridoxal phosphate)lysine mark. T243 lines the pyridoxal 5'-phosphate pocket. C328 acts as the Cysteine persulfide intermediate in catalysis. C328 is a [2Fe-2S] cluster binding site.

Belongs to the class-V pyridoxal-phosphate-dependent aminotransferase family. NifS/IscS subfamily. Homodimer. Forms a heterotetramer with IscU, interacts with other sulfur acceptors. The cofactor is pyridoxal 5'-phosphate.

The protein localises to the cytoplasm. It catalyses the reaction (sulfur carrier)-H + L-cysteine = (sulfur carrier)-SH + L-alanine. The protein operates within cofactor biosynthesis; iron-sulfur cluster biosynthesis. Master enzyme that delivers sulfur to a number of partners involved in Fe-S cluster assembly, tRNA modification or cofactor biosynthesis. Catalyzes the removal of elemental sulfur atoms from cysteine to produce alanine. Functions as a sulfur delivery protein for Fe-S cluster synthesis onto IscU, an Fe-S scaffold assembly protein, as well as other S acceptor proteins. The sequence is that of Cysteine desulfurase IscS from Aeromonas hydrophila subsp. hydrophila (strain ATCC 7966 / DSM 30187 / BCRC 13018 / CCUG 14551 / JCM 1027 / KCTC 2358 / NCIMB 9240 / NCTC 8049).